Consider the following 477-residue polypeptide: Ribulose bisphosphate carboxylase large chain (477 aa).

Residues 1–2 constitute a propeptide that is removed on maturation; that stretch reads MS. Pro-3 carries the post-translational modification N-acetylproline. Lys-14 is modified (N6,N6,N6-trimethyllysine). Asn-123 and Thr-173 together coordinate substrate. Lys-175 functions as the Proton acceptor in the catalytic mechanism. Lys-177 provides a ligand contact to substrate. Mg(2+) contacts are provided by Lys-201, Asp-203, and Glu-204. Lys-201 is subject to N6-carboxylysine. The active-site Proton acceptor is the His-294. Residues Arg-295, His-327, and Ser-379 each contribute to the substrate site.

This sequence belongs to the RuBisCO large chain family. Type I subfamily. In terms of assembly, heterohexadecamer of 8 large chains and 8 small chains; disulfide-linked. The disulfide link is formed within the large subunit homodimers. The cofactor is Mg(2+). In terms of processing, the disulfide bond which can form in the large chain dimeric partners within the hexadecamer appears to be associated with oxidative stress and protein turnover.

Its subcellular location is the plastid. It is found in the chloroplast. The enzyme catalyses 2 (2R)-3-phosphoglycerate + 2 H(+) = D-ribulose 1,5-bisphosphate + CO2 + H2O. It carries out the reaction D-ribulose 1,5-bisphosphate + O2 = 2-phosphoglycolate + (2R)-3-phosphoglycerate + 2 H(+). RuBisCO catalyzes two reactions: the carboxylation of D-ribulose 1,5-bisphosphate, the primary event in carbon dioxide fixation, as well as the oxidative fragmentation of the pentose substrate in the photorespiration process. Both reactions occur simultaneously and in competition at the same active site. The polypeptide is Ribulose bisphosphate carboxylase large chain (Dioscorea elephantipes (Elephant's foot yam)).